A 174-amino-acid chain; its full sequence is Co-chaperone protein HscB homolog (174 aa).

Residues 2-74 form the J domain; that stretch reads NYFELFKFSP…IRRAEHLLSL (73 aa).

Belongs to the HscB family. Interacts with HscA and stimulates its ATPase activity.

Co-chaperone involved in the maturation of iron-sulfur cluster-containing proteins. Seems to help targeting proteins to be folded toward HscA. The protein is Co-chaperone protein HscB homolog of Shewanella sp. (strain W3-18-1).